We begin with the raw amino-acid sequence, 165 residues long: Cytochrome c-550-like protein (165 aa).

Residues 1–30 form the signal peptide; the sequence is MLNKSLLIRFVLTILIIVQVIIFDTQPVQA. Heme c contacts are provided by Cys75, Cys78, His79, and Cys129.

This sequence belongs to the cytochrome c family. PsbV subfamily. Heme c is required as a cofactor.

It localises to the cellular thylakoid membrane. In terms of biological role, possible low-potential cytochrome c. This Trichodesmium erythraeum (strain IMS101) protein is Cytochrome c-550-like protein (psbV2).